We begin with the raw amino-acid sequence, 461 residues long: Fumarate hydratase class II (461 aa).

Substrate is bound by residues S97–T99, H127–D130, S137–N139, and T185. H186 serves as the catalytic Proton donor/acceptor. S316 is a catalytic residue. Substrate contacts are provided by residues S317 and K322 to N324.

Belongs to the class-II fumarase/aspartase family. Fumarase subfamily. In terms of assembly, homotetramer.

It is found in the cytoplasm. The enzyme catalyses (S)-malate = fumarate + H2O. Its pathway is carbohydrate metabolism; tricarboxylic acid cycle; (S)-malate from fumarate: step 1/1. Involved in the TCA cycle. Catalyzes the stereospecific interconversion of fumarate to L-malate. This is Fumarate hydratase class II from Staphylococcus aureus (strain COL).